A 404-amino-acid polypeptide reads, in one-letter code: Coenzyme F420H(2) oxidase (404 aa).

Fe cation is bound by residues His-84, Glu-86, Asp-88, His-89, His-152, Asp-170, and His-233. Residues Val-259 to Ala-399 enclose the Flavodoxin-like domain. Residues Thr-265–Thr-270, Ala-317–Asp-320, and Ser-351–Gly-356 contribute to the FMN site.

In the N-terminal section; belongs to the zinc metallo-hydrolase group 3 family. It depends on FMN as a cofactor. Fe cation serves as cofactor.

It carries out the reaction 2 reduced coenzyme F420-(gamma-L-Glu)(n) + O2 = 2 oxidized coenzyme F420-(gamma-L-Glu)(n) + 2 H2O + 2 H(+). Catalyzes the oxidation of F420H(2) with O(2). May be involved in O(2) detoxification, reducing the intracellular O(2) concentration to a level allowing growth at the expense of methane formation. This Methanothermobacter thermautotrophicus (strain ATCC 29096 / DSM 1053 / JCM 10044 / NBRC 100330 / Delta H) (Methanobacterium thermoautotrophicum) protein is Coenzyme F420H(2) oxidase.